The following is a 418-amino-acid chain: Probable carboxypeptidase AO090166000075 (418 aa).

The signal sequence occupies residues 1 to 18; sequence MKATDLFHVTALVAGALA. Asn-74 carries N-linked (GlcNAc...) asparagine glycosylation. Residue Asp-147 coordinates Zn(2+). The N-linked (GlcNAc...) asparagine glycan is linked to Asn-168. Glu-179 serves as the catalytic Proton acceptor. Residue Glu-180 participates in Zn(2+) binding.

It belongs to the peptidase M20A family. Requires Zn(2+) as cofactor.

Its subcellular location is the secreted. This is Probable carboxypeptidase AO090166000075 from Aspergillus oryzae (strain ATCC 42149 / RIB 40) (Yellow koji mold).